Consider the following 844-residue polypeptide: Penicillin-binding protein 1B (844 aa).

Residues 1 to 10 (MAGNDREPIG) are compositionally biased toward basic and acidic residues. Residues 1-60 (MAGNDREPIGRKGKPTRPVKQKVSRRRYEDDDDYDDYDDYEDEEPMPRKGKGKGKGRKPR) form a disordered region. Topologically, residues 1–63 (MAGNDREPIG…GKGRKPRGKR (63 aa)) are cytoplasmic. Residues 11-25 (RKGKPTRPVKQKVSR) are compositionally biased toward basic residues. A compositionally biased stretch (acidic residues) spans 30 to 44 (DDDDYDDYDDYEDEE). The span at 48–60 (RKGKGKGKGRKPR) shows a compositional bias: basic residues. A helical; Signal-anchor for type II membrane protein transmembrane segment spans residues 64–87 (GWLWLLLKLAIVFAVLIAIYGVYL). The segment at 88–250 (DQKIRSRIDG…DGISLYSIGR (163 aa)) is membrane association. At 88–844 (DQKIRSRIDG…GWIKDMFGSN (757 aa)) the chain is on the periplasmic side. The uvrB domain 2 homolog stretch occupies residues 109 to 200 (RMVNLEPDMT…QFGFFRLDPR (92 aa)). Residues 195–367 (FRLDPRLITM…SIYNPWRNPK (173 aa)) form a transglycosylase region. Catalysis depends on E233, which acts as the Proton donor; for transglycosylase activity. The tract at residues 444 to 736 (SVAQDAAEKA…NNQPTKLYGA (293 aa)) is transpeptidase. S510 functions as the Acyl-ester intermediate; for transpeptidase activity in the catalytic mechanism. Residues 793-825 (LCQQSEMQQQPSGNPFDQSSQPQQQPQQQPAQQ) show a composition bias toward low complexity. The interval 793–835 (LCQQSEMQQQPSGNPFDQSSQPQQQPQQQPAQQEQKDSDGVAG) is disordered.

In the N-terminal section; belongs to the glycosyltransferase 51 family. It in the C-terminal section; belongs to the transpeptidase family. In terms of assembly, forms a trimeric complex with MipA and MltA. Has also been shown to exist as monomer or homodimer; homodimer of Alpha and Gamma isozymes can be found. Interacts with UvrA, FtsL and FtsN.

Its subcellular location is the cell inner membrane. The catalysed reaction is [GlcNAc-(1-&gt;4)-Mur2Ac(oyl-L-Ala-gamma-D-Glu-L-Lys-D-Ala-D-Ala)](n)-di-trans,octa-cis-undecaprenyl diphosphate + beta-D-GlcNAc-(1-&gt;4)-Mur2Ac(oyl-L-Ala-gamma-D-Glu-L-Lys-D-Ala-D-Ala)-di-trans,octa-cis-undecaprenyl diphosphate = [GlcNAc-(1-&gt;4)-Mur2Ac(oyl-L-Ala-gamma-D-Glu-L-Lys-D-Ala-D-Ala)](n+1)-di-trans,octa-cis-undecaprenyl diphosphate + di-trans,octa-cis-undecaprenyl diphosphate + H(+). It carries out the reaction Preferential cleavage: (Ac)2-L-Lys-D-Ala-|-D-Ala. Also transpeptidation of peptidyl-alanyl moieties that are N-acyl substituents of D-alanine.. It participates in cell wall biogenesis; peptidoglycan biosynthesis. Functionally, cell wall formation. Synthesis of cross-linked peptidoglycan from the lipid intermediates. The enzyme has a penicillin-insensitive transglycosylase N-terminal domain (formation of linear glycan strands) and a penicillin-sensitive transpeptidase C-terminal domain (cross-linking of the peptide subunits). The polypeptide is Penicillin-binding protein 1B (mrcB) (Escherichia coli (strain K12)).